A 145-amino-acid polypeptide reads, in one-letter code: Small ribosomal subunit protein eS19 (145 aa).

The tract at residues 120–145 (GGRRISENGQRDLDRIAAQTLEEDDE) is disordered. Basic and acidic residues predominate over residues 123–134 (RISENGQRDLDR).

Belongs to the eukaryotic ribosomal protein eS19 family. In terms of assembly, component of the small ribosomal subunit. Mature ribosomes consist of a small (40S) and a large (60S) subunit. The 40S subunit contains about 32 different proteins and 1 molecule of RNA (18S). The 60S subunit contains 45 different proteins and 3 molecules of RNA (25S, 5.8S and 5S).

It is found in the cytoplasm. In terms of biological role, component of the ribosome, a large ribonucleoprotein complex responsible for the synthesis of proteins in the cell. The small ribosomal subunit (SSU) binds messenger RNAs (mRNAs) and translates the encoded message by selecting cognate aminoacyl-transfer RNA (tRNA) molecules. The large subunit (LSU) contains the ribosomal catalytic site termed the peptidyl transferase center (PTC), which catalyzes the formation of peptide bonds, thereby polymerizing the amino acids delivered by tRNAs into a polypeptide chain. The nascent polypeptides leave the ribosome through a tunnel in the LSU and interact with protein factors that function in enzymatic processing, targeting, and the membrane insertion of nascent chains at the exit of the ribosomal tunnel. RPS19A is required for proper maturation of the small (40S) ribosomal subunit. The chain is Small ribosomal subunit protein eS19 (RPS19A) from Candida albicans (strain SC5314 / ATCC MYA-2876) (Yeast).